The following is a 205-amino-acid chain: Imidazole glycerol phosphate synthase subunit HisH (205 aa).

The 203-residue stretch at 3 to 205 (KIGLIDYGMG…LLRRWIKSIQ (203 aa)) folds into the Glutamine amidotransferase type-1 domain. Residue Cys-81 is the Nucleophile of the active site. Catalysis depends on residues His-185 and Glu-187.

Heterodimer of HisH and HisF.

It localises to the cytoplasm. It catalyses the reaction 5-[(5-phospho-1-deoxy-D-ribulos-1-ylimino)methylamino]-1-(5-phospho-beta-D-ribosyl)imidazole-4-carboxamide + L-glutamine = D-erythro-1-(imidazol-4-yl)glycerol 3-phosphate + 5-amino-1-(5-phospho-beta-D-ribosyl)imidazole-4-carboxamide + L-glutamate + H(+). The catalysed reaction is L-glutamine + H2O = L-glutamate + NH4(+). Its pathway is amino-acid biosynthesis; L-histidine biosynthesis; L-histidine from 5-phospho-alpha-D-ribose 1-diphosphate: step 5/9. In terms of biological role, IGPS catalyzes the conversion of PRFAR and glutamine to IGP, AICAR and glutamate. The HisH subunit catalyzes the hydrolysis of glutamine to glutamate and ammonia as part of the synthesis of IGP and AICAR. The resulting ammonia molecule is channeled to the active site of HisF. This Prochlorococcus marinus subsp. pastoris (strain CCMP1986 / NIES-2087 / MED4) protein is Imidazole glycerol phosphate synthase subunit HisH.